Consider the following 299-residue polypeptide: tRNA uridine(34) hydroxylase (299 aa).

Positions 132 to 226 (AGRPVVMLDT…YFEEVGGAHY (95 aa)) constitute a Rhodanese domain. The active-site Cysteine persulfide intermediate is the C186.

It belongs to the TrhO family.

The catalysed reaction is uridine(34) in tRNA + AH2 + O2 = 5-hydroxyuridine(34) in tRNA + A + H2O. In terms of biological role, catalyzes oxygen-dependent 5-hydroxyuridine (ho5U) modification at position 34 in tRNAs. The polypeptide is tRNA uridine(34) hydroxylase (Burkholderia pseudomallei (strain 1106a)).